Here is a 338-residue protein sequence, read N- to C-terminus: Uroporphyrinogen decarboxylase (338 aa).

Substrate is bound by residues 27–31, Asp-77, Tyr-151, Ser-203, and His-317; that span reads RQAGR.

It belongs to the uroporphyrinogen decarboxylase family. As to quaternary structure, homodimer.

Its subcellular location is the cytoplasm. It catalyses the reaction uroporphyrinogen III + 4 H(+) = coproporphyrinogen III + 4 CO2. It participates in porphyrin-containing compound metabolism; protoporphyrin-IX biosynthesis; coproporphyrinogen-III from 5-aminolevulinate: step 4/4. Catalyzes the decarboxylation of four acetate groups of uroporphyrinogen-III to yield coproporphyrinogen-III. This chain is Uroporphyrinogen decarboxylase, found in Wolbachia pipientis wMel.